A 164-amino-acid chain; its full sequence is R-phycoerythrin alpha chain (164 aa).

The (2R,3E)-phycoerythrobilin site is built by C82 and C139.

The protein belongs to the phycobiliprotein family. As to quaternary structure, heterodimer of an alpha and a beta chain. Contains two covalently linked bilin chromophores.

It localises to the plastid. The protein localises to the chloroplast thylakoid membrane. Light-harvesting photosynthetic bile pigment-protein from the phycobiliprotein complex. This Lophosiphonia boldii (Red alga) protein is R-phycoerythrin alpha chain (cpeA).